The following is a 272-amino-acid chain: Putative phosphatase HI_0597 (272 aa).

The Nucleophile role is filled by D11. D11 provides a ligand contact to Mg(2+). Position 12 (L12) interacts with phosphate. Mg(2+) is bound at residue D13. Residues 45-46 and K195 contribute to the phosphate site; that span reads TG. D218 is a binding site for Mg(2+). N221 lines the phosphate pocket.

The protein belongs to the HAD-like hydrolase superfamily. Cof family. Mg(2+) serves as cofactor.

The sequence is that of Putative phosphatase HI_0597 from Haemophilus influenzae (strain ATCC 51907 / DSM 11121 / KW20 / Rd).